The sequence spans 1427 residues: DNA-directed RNA polymerase subunit beta' (1427 aa).

Zn(2+) contacts are provided by Cys-66, Cys-68, Cys-81, and Cys-84. Asp-472, Asp-474, and Asp-476 together coordinate Mg(2+). Residues Cys-815, Cys-889, Cys-896, and Cys-899 each coordinate Zn(2+).

It belongs to the RNA polymerase beta' chain family. The RNAP catalytic core consists of 2 alpha, 1 beta, 1 beta' and 1 omega subunit. When a sigma factor is associated with the core the holoenzyme is formed, which can initiate transcription. Mg(2+) is required as a cofactor. Zn(2+) serves as cofactor.

The catalysed reaction is RNA(n) + a ribonucleoside 5'-triphosphate = RNA(n+1) + diphosphate. Its function is as follows. DNA-dependent RNA polymerase catalyzes the transcription of DNA into RNA using the four ribonucleoside triphosphates as substrates. The chain is DNA-directed RNA polymerase subunit beta' from Bacteroides thetaiotaomicron (strain ATCC 29148 / DSM 2079 / JCM 5827 / CCUG 10774 / NCTC 10582 / VPI-5482 / E50).